A 76-amino-acid polypeptide reads, in one-letter code: Exodeoxyribonuclease 7 small subunit (76 aa).

The protein belongs to the XseB family. In terms of assembly, heterooligomer composed of large and small subunits.

The protein localises to the cytoplasm. It carries out the reaction Exonucleolytic cleavage in either 5'- to 3'- or 3'- to 5'-direction to yield nucleoside 5'-phosphates.. Bidirectionally degrades single-stranded DNA into large acid-insoluble oligonucleotides, which are then degraded further into small acid-soluble oligonucleotides. The protein is Exodeoxyribonuclease 7 small subunit of Staphylococcus aureus (strain Mu3 / ATCC 700698).